The following is a 570-amino-acid chain: Proline--tRNA ligase (570 aa).

This sequence belongs to the class-II aminoacyl-tRNA synthetase family. ProS type 1 subfamily. Homodimer.

The protein resides in the cytoplasm. The catalysed reaction is tRNA(Pro) + L-proline + ATP = L-prolyl-tRNA(Pro) + AMP + diphosphate. Catalyzes the attachment of proline to tRNA(Pro) in a two-step reaction: proline is first activated by ATP to form Pro-AMP and then transferred to the acceptor end of tRNA(Pro). As ProRS can inadvertently accommodate and process non-cognate amino acids such as alanine and cysteine, to avoid such errors it has two additional distinct editing activities against alanine. One activity is designated as 'pretransfer' editing and involves the tRNA(Pro)-independent hydrolysis of activated Ala-AMP. The other activity is designated 'posttransfer' editing and involves deacylation of mischarged Ala-tRNA(Pro). The misacylated Cys-tRNA(Pro) is not edited by ProRS. In Shewanella sp. (strain MR-7), this protein is Proline--tRNA ligase.